The chain runs to 21 residues: Protein YnfR (21 aa).

The polypeptide is Protein YnfR (Escherichia coli (strain K12)).